The sequence spans 202 residues: Small ribosomal subunit protein uS4 (202 aa).

The interval E17–R42 is disordered. Residues M90–H152 enclose the S4 RNA-binding domain.

The protein belongs to the universal ribosomal protein uS4 family. As to quaternary structure, part of the 30S ribosomal subunit. Contacts protein S5. The interaction surface between S4 and S5 is involved in control of translational fidelity.

In terms of biological role, one of the primary rRNA binding proteins, it binds directly to 16S rRNA where it nucleates assembly of the body of the 30S subunit. Its function is as follows. With S5 and S12 plays an important role in translational accuracy. This chain is Small ribosomal subunit protein uS4, found in Acaryochloris marina (strain MBIC 11017).